A 73-amino-acid polypeptide reads, in one-letter code: Translation initiation factor IF-1 1 (73 aa).

The S1-like domain maps to 1 to 72 (MAKEELIEFG…TKGRINFRHK (72 aa)).

The protein belongs to the IF-1 family. Component of the 30S ribosomal translation pre-initiation complex which assembles on the 30S ribosome in the order IF-2 and IF-3, IF-1 and N-formylmethionyl-tRNA(fMet); mRNA recruitment can occur at any time during PIC assembly.

It localises to the cytoplasm. In terms of biological role, one of the essential components for the initiation of protein synthesis. Stabilizes the binding of IF-2 and IF-3 on the 30S subunit to which N-formylmethionyl-tRNA(fMet) subsequently binds. Helps modulate mRNA selection, yielding the 30S pre-initiation complex (PIC). Upon addition of the 50S ribosomal subunit IF-1, IF-2 and IF-3 are released leaving the mature 70S translation initiation complex. The polypeptide is Translation initiation factor IF-1 1 (Cupriavidus metallidurans (strain ATCC 43123 / DSM 2839 / NBRC 102507 / CH34) (Ralstonia metallidurans)).